Reading from the N-terminus, the 368-residue chain is Anaphase-promoting complex subunit MND2 (368 aa).

Disordered stretches follow at residues 140–167 and 286–336; these read AQNAEGNNEEDFRQHDSREEDPRNNGSI and RNPY…GITP. The span at 149-162 shows a compositional bias: basic and acidic residues; that stretch reads EDFRQHDSREEDPR. Ser-293 carries the phosphoserine modification.

The protein belongs to the APC15 family. In terms of assembly, the APC/C is composed of at least 13 subunits that stay tightly associated throughout the cell cycle: APC1, APC2, APC4, APC5, APC9, APC11, CDC16, CDC23, CDC26, CDC27, DOC1, MND2 and SWM1. MND2 interacts directly with APC1, APC5 and CDC23.

The protein operates within protein modification; protein ubiquitination. Functionally, component of the anaphase promoting complex/cyclosome (APC/C), a cell cycle-regulated E3 ubiquitin-protein ligase complex that controls progression through mitosis and the G1 phase of the cell cycle. The APC/C is thought to confer substrate specificity and, in the presence of ubiquitin-conjugating E2 enzymes, it catalyzes the formation of protein-ubiquitin conjugates that are subsequently degraded by the 26S proteasome. In early mitosis, the APC/C is activated by CDC20 and targets securin PDS1, the B-type cyclin CLB5, and other anaphase inhibitory proteins for proteolysis, thereby triggering the separation of sister chromatids at the metaphase-to-anaphase transition. In late mitosis and in G1, degradation of CLB5 allows activation of the APC/C by CDH1, which is needed to destroy CDC20 and the B-type cyclin CLB2 to allow exit from mitosis and creating the low CDK state necessary for cytokinesis and for reforming prereplicative complexes in G1 prior to another round of replication. This is Anaphase-promoting complex subunit MND2 (MND2) from Saccharomyces cerevisiae (strain ATCC 204508 / S288c) (Baker's yeast).